The sequence spans 75 residues: uncharacterized protein (75 aa).

Positions 19 to 38 (FHNTAPSKTNVNVPRANKSQ) are enriched in polar residues. The disordered stretch occupies residues 19-42 (FHNTAPSKTNVNVPRANKSQSKGK). The chain crosses the membrane as a helical span at residues 47–66 (LLVLVGTLALVTSVISVNYQ).

Its subcellular location is the membrane. This is an uncharacterized protein from Saccharomyces cerevisiae (strain ATCC 204508 / S288c) (Baker's yeast).